Reading from the N-terminus, the 293-residue chain is Tyrosine recombinase XerD (293 aa).

One can recognise a Core-binding (CB) domain in the interval 1-83 (MHGLIADFIH…ALRKFYRFLL (83 aa)). A Tyr recombinase domain is found at 104-287 (HLPATLSGTE…SNQHLVAVYH (184 aa)). Catalysis depends on residues R144, K168, H239, R242, and H265. Y274 (O-(3'-phospho-DNA)-tyrosine intermediate) is an active-site residue.

Belongs to the 'phage' integrase family. XerD subfamily. In terms of assembly, forms a cyclic heterotetrameric complex composed of two molecules of XerC and two molecules of XerD.

The protein resides in the cytoplasm. Functionally, site-specific tyrosine recombinase, which acts by catalyzing the cutting and rejoining of the recombining DNA molecules. The XerC-XerD complex is essential to convert dimers of the bacterial chromosome into monomers to permit their segregation at cell division. It also contributes to the segregational stability of plasmids. The protein is Tyrosine recombinase XerD of Lacticaseibacillus casei (Lactobacillus casei).